Reading from the N-terminus, the 526-residue chain is MSVIKRALISLSDKAGAVEFAQNLHKLGVEILSTGGTAKLLAGAGVPVIEVADYTGFPEMLDGRVKTLHPKIHGGILGRRDLDEHVAKMEEHGIGNIDLVCVNLYPFAATIAKPGCTLEDAIENIDIGGPTMVRSAAKNWKHVAIVTDTADFPAIAAELEANNGALSDKTRFNLSRKAFSHTAQYDGMISNYLTSLSDGVLSGEPEIGEFPSRFNQSWIKVQDMRYGENPHQRAAFYRDIDPAAGSLSAYNQLQGKELSYNNIADADAAWEAVKSFDAPACVIVKHANPCGVAVAADTLTAYKLAYATDTTSAFGGIIAFNREVDGETVKQITDNQFMEVLMAPKFTAEALEIAAAKKNVRVLEVPLKAGANRFELKRVGGGLLVQTPDINRINRADLKVVSKRQPTEQEWNDLLFVWNVAKYVKSNAIVFGKGGQTYGIGAGQMSRVDSTRIAARKAQDAGLDLNGACAASDAFFPFRDGVDVIAEQGIKAIIHPAGSMRDQEVFDAADEHGIAMAVTGIRHFRH.

The MGS-like domain maps to Met1–Thr147.

This sequence belongs to the PurH family.

The enzyme catalyses (6R)-10-formyltetrahydrofolate + 5-amino-1-(5-phospho-beta-D-ribosyl)imidazole-4-carboxamide = 5-formamido-1-(5-phospho-D-ribosyl)imidazole-4-carboxamide + (6S)-5,6,7,8-tetrahydrofolate. It carries out the reaction IMP + H2O = 5-formamido-1-(5-phospho-D-ribosyl)imidazole-4-carboxamide. It functions in the pathway purine metabolism; IMP biosynthesis via de novo pathway; 5-formamido-1-(5-phospho-D-ribosyl)imidazole-4-carboxamide from 5-amino-1-(5-phospho-D-ribosyl)imidazole-4-carboxamide (10-formyl THF route): step 1/1. It participates in purine metabolism; IMP biosynthesis via de novo pathway; IMP from 5-formamido-1-(5-phospho-D-ribosyl)imidazole-4-carboxamide: step 1/1. The chain is Bifunctional purine biosynthesis protein PurH from Neisseria gonorrhoeae (strain ATCC 700825 / FA 1090).